Consider the following 468-residue polypeptide: Ammonium transporter Amt2 (468 aa).

12 consecutive transmembrane segments (helical) span residues 1 to 21 (MVGR…TAGA), 39 to 59 (FVWA…FAML), 77 to 97 (LMDF…LMMG), 123 to 143 (LWFF…GSIA), 156 to 176 (AVVS…GGWL), 194 to 214 (FAGS…AVML), 236 to 256 (LAFA…FNAG), 268 to 288 (IIAS…MAIT), 297 to 317 (VGMT…PCAW), 321 to 341 (WSSV…YWWL), 350 to 370 (VGAI…LGIF), and 400 to 420 (LISA…LFWI).

It belongs to the ammonia transporter channel (TC 1.A.11.2) family. As to quaternary structure, homotrimer.

It localises to the cell membrane. Involved in the uptake of ammonium/ammonia (NH(4)(+)/NH(3)). Transport is electrogenic. In Archaeoglobus fulgidus (strain ATCC 49558 / DSM 4304 / JCM 9628 / NBRC 100126 / VC-16), this protein is Ammonium transporter Amt2.